The chain runs to 872 residues: DNA mismatch repair protein MutS (872 aa).

602–609 provides a ligand contact to ATP; it reads GPNMSGKS.

It belongs to the DNA mismatch repair MutS family.

In terms of biological role, this protein is involved in the repair of mismatches in DNA. It is possible that it carries out the mismatch recognition step. This protein has a weak ATPase activity. The polypeptide is DNA mismatch repair protein MutS (Staphylococcus aureus (strain bovine RF122 / ET3-1)).